The following is a 248-amino-acid chain: UPF0736 protein BT9727_1080 (248 aa).

This sequence belongs to the UPF0736 family.

The protein is UPF0736 protein BT9727_1080 of Bacillus thuringiensis subsp. konkukian (strain 97-27).